We begin with the raw amino-acid sequence, 431 residues long: Helix-loop-helix protein 11 (431 aa).

The tract at residues 88-109 is disordered; that stretch reads LANRSLSQPAPLSPTSLDPDRR. The segment covering 91 to 103 has biased composition (polar residues); that stretch reads RSLSQPAPLSPTS. In terms of domain architecture, bHLH spans 112 to 163; the sequence is MRRQIANCNERRRMQSINAGFLALRALLPRKEGEKLSKAAILQQTADMVHQL. Composition is skewed to polar residues over residues 226-241 and 248-257; these read TTTSSQASSPVTPRSN and LPSSYASSAL. The segment at 226 to 311 is disordered; the sequence is TTTSSQASSP…PPPTLPSLET (86 aa). Over residues 274 to 291 the composition is skewed to low complexity; sequence TTSTPLSLLTLNGSPTSS.

In terms of tissue distribution, expressed in the pharynx, nerve cords, the H-shaped excretory cell, vulva muscles, and the anal depressor (at protein level). Expressed in the intestine (at protein level). In males, it is also expressed in the spicules and hyp7 cells of the hypodermis (at protein level).

The protein localises to the nucleus. Its function is as follows. Transcriptional regulator. Component of a feedback loop involving atfs-1, atgl-1 and hlh-11. Binds to the promoter of the atgl-1 lipase to negatively regulate the expression of atgl-1, and thereby promoting fat oxidation in response to mitochondrial stress and mitochondrial respiration in the intestine. In addition, functions with atfs-1 to maintain lifespan. May have a role in fertility and in positively regulating body size. This is Helix-loop-helix protein 11 from Caenorhabditis elegans.